A 195-amino-acid chain; its full sequence is Segregation and condensation protein B (195 aa).

The protein belongs to the ScpB family. As to quaternary structure, homodimer. Homodimerization may be required to stabilize the binding of ScpA to the Smc head domains. Component of a cohesin-like complex composed of ScpA, ScpB and the Smc homodimer, in which ScpA and ScpB bind to the head domain of Smc. The presence of the three proteins is required for the association of the complex with DNA.

It localises to the cytoplasm. Its function is as follows. Participates in chromosomal partition during cell division. May act via the formation of a condensin-like complex containing Smc and ScpA that pull DNA away from mid-cell into both cell halves. This chain is Segregation and condensation protein B, found in Clostridium perfringens (strain SM101 / Type A).